The primary structure comprises 200 residues: Prolactin (200 aa).

3 disulfides stabilise this stretch: cysteine 4–cysteine 11, cysteine 59–cysteine 175, and cysteine 192–cysteine 200.

Belongs to the somatotropin/prolactin family. In terms of tissue distribution, pituitary gland.

The protein resides in the secreted. The protein is Prolactin (prl) of Protopterus aethiopicus (Marbled lungfish).